A 454-amino-acid chain; its full sequence is Protein disulfide-isomerase TMX3 (454 aa).

The signal sequence occupies residues 1–24 (MAAWKSWAALRLCATVVLLDMVVC). One can recognise a Thioredoxin domain in the interval 25 to 128 (KGFVEDLDES…KDDIIEFAHR (104 aa)). Over 25–375 (KGFVEDLDES…TIVSIFKSSP (351 aa)) the chain is Lumenal. Residues C53 and C56 each act as nucleophile in the active site. A disulfide bridge connects residues C53 and C56. N258 and N313 each carry an N-linked (GlcNAc...) asparagine glycan. A helical membrane pass occupies residues 376–396 (LMGCFLFGLPLGVISIMCYGI). Over 397 to 454 (YTADTDGGYIEERYEVSKSENENQEQIEESKEQQEPSSGGSVVPTVQEPKDVLEKKKD) the chain is Cytoplasmic. Residues 412–454 (VSKSENENQEQIEESKEQQEPSSGGSVVPTVQEPKDVLEKKKD) form a disordered region. A compositionally biased stretch (basic and acidic residues) spans 444 to 454 (EPKDVLEKKKD). The Di-lysine motif motif lies at 451-454 (KKKD).

Belongs to the protein disulfide isomerase family.

It is found in the endoplasmic reticulum membrane. It catalyses the reaction Catalyzes the rearrangement of -S-S- bonds in proteins.. In terms of biological role, probable disulfide isomerase, which participates in the folding of proteins containing disulfide bonds. May act as a dithiol oxidase. Acts as a regulator of endoplasmic reticulum-mitochondria contact sites via its ability to regulate redox signals. This chain is Protein disulfide-isomerase TMX3 (TMX3), found in Pongo abelii (Sumatran orangutan).